We begin with the raw amino-acid sequence, 201 residues long: Lymphotoxin-alpha (201 aa).

An N-terminal signal peptide occupies residues 1 to 27 (MTSSGVLCLLGALSLQVLLLQPPGAQG). The interval 23–52 (PGAQGAPNPDNSHSSSPAPPQTAQHLSQKS) is disordered. The segment covering 31 to 51 (PDNSHSSSPAPPQTAQHLSQK) has biased composition (polar residues). A THD domain is found at 60–201 (PAAHLVGDPS…SSVFFGAFAL (142 aa)). Residue Asn-93 is glycosylated (N-linked (GlcNAc...) asparagine). Residues Cys-117 and Cys-152 are joined by a disulfide bond.

The protein belongs to the tumor necrosis factor family. In terms of assembly, homotrimer, and heterotrimer of either two LTB and one LTA subunits or (less prevalent) two LTA and one LTB subunits. Interacts with TNFRSF14.

The protein resides in the secreted. Its subcellular location is the membrane. Its function is as follows. Cytokine that in its homotrimeric form binds to TNFRSF1A/TNFR1, TNFRSF1B/TNFBR and TNFRSF14/HVEM. In its heterotrimeric form with LTB binds to TNFRSF3/LTBR. Lymphotoxin is produced by lymphocytes and is cytotoxic for a wide range of tumor cells in vitro and in vivo. This Notamacropus eugenii (Tammar wallaby) protein is Lymphotoxin-alpha (LTA).